Reading from the N-terminus, the 303-residue chain is Ferrochelatase (303 aa).

His185 and Glu262 together coordinate Fe cation.

It belongs to the ferrochelatase family.

The protein resides in the cytoplasm. It catalyses the reaction heme b + 2 H(+) = protoporphyrin IX + Fe(2+). It participates in porphyrin-containing compound metabolism; protoheme biosynthesis; protoheme from protoporphyrin-IX: step 1/1. Functionally, catalyzes the ferrous insertion into protoporphyrin IX. In Campylobacter jejuni subsp. doylei (strain ATCC BAA-1458 / RM4099 / 269.97), this protein is Ferrochelatase.